A 116-amino-acid polypeptide reads, in one-letter code: Large ribosomal subunit protein bL20 (116 aa).

The protein belongs to the bacterial ribosomal protein bL20 family.

Its function is as follows. Binds directly to 23S ribosomal RNA and is necessary for the in vitro assembly process of the 50S ribosomal subunit. It is not involved in the protein synthesizing functions of that subunit. This is Large ribosomal subunit protein bL20 (rplT) from Mycoplasmopsis fermentans (Mycoplasma fermentans).